Here is a 512-residue protein sequence, read N- to C-terminus: Maturase K (512 aa).

This sequence belongs to the intron maturase 2 family. MatK subfamily.

The protein resides in the plastid. It localises to the chloroplast. Functionally, usually encoded in the trnK tRNA gene intron. Probably assists in splicing its own and other chloroplast group II introns. This Oenothera biennis (German evening primrose) protein is Maturase K.